Consider the following 428-residue polypeptide: C4-dicarboxylate transport protein (428 aa).

Transmembrane regions (helical) follow at residues 8–28, 44–64, 76–96, 142–162, 184–204, 222–242, 289–309, 326–346, and 352–372; these read SLYVQVLTAIAIGILLGHFYP, LIKMVIAPVIFCTVVTGIAGM, VALLYFEVVSTIALIIGLIIV, IGAFASGNILQVLLFAVLFGF, VIFGIINMIMRLAPIGAFGAM, LIICFYITCILFVVVVLGSIA, VVGLVIPTGYSFNLDGTSIYL, IFHQITLLVVLLLSSKGAAGV, and IVLAATISAVGHLPVAGLALI.

It belongs to the dicarboxylate/amino acid:cation symporter (DAACS) (TC 2.A.23) family.

Its subcellular location is the cell inner membrane. Responsible for the transport of dicarboxylates such as succinate, fumarate, and malate from the periplasm across the membrane. The protein is C4-dicarboxylate transport protein of Klebsiella pneumoniae (strain 342).